We begin with the raw amino-acid sequence, 163 residues long: Photosystem II extrinsic protein V (163 aa).

Positions 1–26 (MFRRLIGVVVATVLLSFQLLVGSATA) are cleaved as a signal peptide. Residues Cys63, Cys66, His67, and His118 each contribute to the heme c site.

It belongs to the cytochrome c family. PsbV subfamily. PSII is composed of 1 copy each of membrane proteins PsbA, PsbB, PsbC, PsbD, PsbE, PsbF, PsbH, PsbI, PsbJ, PsbK, PsbL, PsbM, PsbT, PsbX, PsbY, PsbZ, Psb30/Ycf12, peripheral proteins PsbO, CyanoQ (PsbQ), PsbU, PsbV and a large number of cofactors. It forms dimeric complexes. Requires heme c as cofactor.

It localises to the cellular thylakoid membrane. In terms of biological role, one of the extrinsic, lumenal subunits of photosystem II (PSII). PSII is a light-driven water plastoquinone oxidoreductase, using light energy to abstract electrons from H(2)O, generating a proton gradient subsequently used for ATP formation. The extrinsic proteins stabilize the structure of photosystem II oxygen-evolving complex (OEC), the ion environment of oxygen evolution and protect the OEC against heat-induced inactivation. Low-potential cytochrome c that plays a role in the OEC of PSII. The protein is Photosystem II extrinsic protein V of Nostoc punctiforme (strain ATCC 29133 / PCC 73102).